The following is a 536-amino-acid chain: Phosphoenolpyruvate carboxykinase (ATP) (536 aa).

Residues Arg61, Tyr195, and Lys201 each contribute to the substrate site. ATP-binding positions include Lys201, His220, and 236–244 (GLSGTGKTT). Mn(2+)-binding residues include Lys201 and His220. Asp257 serves as a coordination point for Mn(2+). ATP-binding residues include Glu285, Arg322, and Thr447. Arg322 contacts substrate.

It belongs to the phosphoenolpyruvate carboxykinase (ATP) family. Mn(2+) serves as cofactor.

The protein resides in the cytoplasm. The enzyme catalyses oxaloacetate + ATP = phosphoenolpyruvate + ADP + CO2. The protein operates within carbohydrate biosynthesis; gluconeogenesis. In terms of biological role, involved in the gluconeogenesis. Catalyzes the conversion of oxaloacetate (OAA) to phosphoenolpyruvate (PEP) through direct phosphoryl transfer between the nucleoside triphosphate and OAA. The sequence is that of Phosphoenolpyruvate carboxykinase (ATP) from Rhizobium rhizogenes (strain K84 / ATCC BAA-868) (Agrobacterium radiobacter).